The chain runs to 54 residues: Light-harvesting protein B-870 beta chain (54 aa).

The Cytoplasmic segment spans residues 1–20 (EVKQESLSGITEGEAKEFHK). A bacteriochlorophyll-binding residues include His19 and His37. A helical membrane pass occupies residues 21–43 (IFTSSILVFFGVAAFAHLLVWIW). Residues 44 to 54 (RPWVPGPNGYS) are Periplasmic-facing.

This sequence belongs to the antenna complex beta subunit family. In terms of assembly, the core complex is formed by different alpha and beta chains, binding bacteriochlorophyll molecules, and arranged most probably in tetrameric structures disposed around the reaction center. The non-pigmented gamma chains may constitute additional components.

Its subcellular location is the cell inner membrane. Antenna complexes are light-harvesting systems, which transfer the excitation energy to the reaction centers. The chain is Light-harvesting protein B-870 beta chain from Rhodospirillum rubrum.